The primary structure comprises 1037 residues: Presequence protease, mitochondrial (1037 aa).

The transit peptide at methionine 1–arginine 15 directs the protein to the mitochondrion. Histidine 104 is a Zn(2+) binding site. Glutamate 107 acts as the Proton acceptor in catalysis. Zn(2+)-binding residues include histidine 108 and glutamate 205. Cysteine 119 and cysteine 556 form a disulfide bridge. An N6-acetyllysine modification is found at lysine 759. Position 770 is an N6-acetyllysine; alternate (lysine 770). Lysine 770 is subject to N6-succinyllysine; alternate. Positions isoleucine 803–histidine 834 are disordered. The span at glycine 804 to arginine 814 shows a compositional bias: basic residues. Lysine 849 is modified (N6-succinyllysine). At lysine 884 the chain carries N6-acetyllysine. At lysine 946 the chain carries N6-succinyllysine.

The protein belongs to the peptidase M16 family. PreP subfamily. Monomer and homodimer; homodimerization is induced by binding of the substrate. Zn(2+) serves as cofactor. In terms of processing, a disulfide bond locks the enzyme in the closed conformation preventing substrate entry into the catalytic chamber.

The protein resides in the mitochondrion matrix. Mainly exists in a closed and catalytically competent conformation but a closed-to-open switch allows substrate entry into the catalytic chamber. Substrate binding induces closure and dimerization. A disulfide bond may lock the enzyme in a closed conformation preventing substrate entry into the catalytic chamber, participating in redox regulation of the enzyme. Inhibited by metal-chelating agents. Inhibited by nickel and zinc excess, and slightly activated by manganese. Metalloendopeptidase of the mitochondrial matrix that functions in peptide cleavage and degradation rather than in protein processing. Has an ATP-independent activity. Specifically cleaves peptides in the range of 5 to 65 residues. Shows a preference for cleavage after small polar residues and before basic residues, but without any positional preference. Degrades the transit peptides of mitochondrial proteins after their cleavage. Also degrades other unstructured peptides. It is also able to degrade amyloid-beta protein 40, one of the peptides produced by APP processing, when it accumulates in mitochondrion. It is a highly efficient protease, at least toward amyloid-beta protein 40. Cleaves that peptide at a specific position and is probably not processive, releasing digested peptides intermediates that can be further cleaved subsequently. It is also able to degrade amyloid-beta protein 42. This is Presequence protease, mitochondrial from Pongo abelii (Sumatran orangutan).